Reading from the N-terminus, the 533-residue chain is Putative adhesin P1-like protein MPN_409 (533 aa).

Disordered stretches follow at residues 15–45 (KNHR…GSRS) and 92–166 (SGWR…SITP). A compositionally biased stretch (low complexity) spans 28–45 (TGAGSSSGTSTNTSGSRS). A compositionally biased stretch (basic and acidic residues) spans 95–107 (RNDKNGQSDENHT).

It belongs to the adhesin P1 family.

This is Putative adhesin P1-like protein MPN_409 from Mycoplasma pneumoniae (strain ATCC 29342 / M129 / Subtype 1) (Mycoplasmoides pneumoniae).